Here is a 264-residue protein sequence, read N- to C-terminus: Glutamate racemase (264 aa).

Substrate is bound by residues Asp-10 to Ser-11 and Tyr-42 to Gly-43. Cys-73 serves as the catalytic Proton donor/acceptor. A substrate-binding site is contributed by Asn-74–Thr-75. Cys-183 (proton donor/acceptor) is an active-site residue. Thr-184–His-185 contacts substrate.

This sequence belongs to the aspartate/glutamate racemases family. Homodimer.

The enzyme catalyses L-glutamate = D-glutamate. It functions in the pathway cell wall biogenesis; peptidoglycan biosynthesis. Its function is as follows. Provides the (R)-glutamate required for cell wall biosynthesis. This chain is Glutamate racemase, found in Streptococcus pyogenes serotype M1.